The primary structure comprises 178 residues: Large ribosomal subunit protein uL6 (178 aa).

This sequence belongs to the universal ribosomal protein uL6 family. In terms of assembly, part of the 50S ribosomal subunit.

Its function is as follows. This protein binds to the 23S rRNA, and is important in its secondary structure. It is located near the subunit interface in the base of the L7/L12 stalk, and near the tRNA binding site of the peptidyltransferase center. The protein is Large ribosomal subunit protein uL6 of Levilactobacillus brevis (strain ATCC 367 / BCRC 12310 / CIP 105137 / JCM 1170 / LMG 11437 / NCIMB 947 / NCTC 947) (Lactobacillus brevis).